Reading from the N-terminus, the 153-residue chain is Heavy metal-associated isoprenylated plant protein 26 (153 aa).

Residues 25–89 enclose the HMA domain; that stretch reads LQTVEIKVKM…MSHRTGKKVE (65 aa). Cys36 and Cys39 together coordinate a metal cation. The residue at position 150 (Cys150) is a Cysteine methyl ester. The S-farnesyl cysteine moiety is linked to residue Cys150. The propeptide at 151-153 is removed in mature form; sequence VVM.

Belongs to the HIPP family. As to quaternary structure, interacts with ZHD11/HB29 and ACBP2 (via ankyrin repeats). May also interact with HB21. In terms of tissue distribution, expressed in roots, stems and flowers. Lower expression in siliques and leaves. Expressed in the vascular tissues. Detected in lateral roots, shoot apical meristem, petals of unopened flowers and weak expression in leaf vasculature.

It is found in the nucleus membrane. It localises to the cell membrane. Its function is as follows. Heavy-metal-binding protein. Binds lead, cadmium and copper. May be involved in heavy-metal transport. May be involved in cadmium transport and play a role in cadmium detoxification. In Arabidopsis thaliana (Mouse-ear cress), this protein is Heavy metal-associated isoprenylated plant protein 26.